A 255-amino-acid polypeptide reads, in one-letter code: 5'-nucleotidase SurE (255 aa).

A divalent metal cation contacts are provided by Asp-8, Asp-9, Ser-40, and Asn-93.

This sequence belongs to the SurE nucleotidase family. It depends on a divalent metal cation as a cofactor.

It localises to the cytoplasm. The enzyme catalyses a ribonucleoside 5'-phosphate + H2O = a ribonucleoside + phosphate. In terms of biological role, nucleotidase that shows phosphatase activity on nucleoside 5'-monophosphates. This is 5'-nucleotidase SurE from Nitrobacter winogradskyi (strain ATCC 25391 / DSM 10237 / CIP 104748 / NCIMB 11846 / Nb-255).